Here is a 661-residue protein sequence, read N- to C-terminus: tRNA uridine 5-carboxymethylaminomethyl modification enzyme MnmG (661 aa).

FAD contacts are provided by residues 16–21, valine 128, and serine 183; that span reads GAGHAG. The tract at residues 206–230 is disordered; that stretch reads PRVNGNTIDYSKTEEEPGDKTPRHF. Basic and acidic residues predominate over residues 216-230; sequence SKTEEEPGDKTPRHF. 277–291 is an NAD(+) binding site; it reads GPRYCPSIEDKVVRF. Glutamine 374 contacts FAD.

It belongs to the MnmG family. As to quaternary structure, homodimer. Heterotetramer of two MnmE and two MnmG subunits. It depends on FAD as a cofactor.

The protein localises to the cytoplasm. In terms of biological role, NAD-binding protein involved in the addition of a carboxymethylaminomethyl (cmnm) group at the wobble position (U34) of certain tRNAs, forming tRNA-cmnm(5)s(2)U34. This chain is tRNA uridine 5-carboxymethylaminomethyl modification enzyme MnmG, found in Lactobacillus helveticus (strain DPC 4571).